The primary structure comprises 1173 residues: Thrombospondin-1 (1173 aa).

A signal peptide spans 1-18 (MKGIFLLLMLVMPQTHQA). A Laminin G-like domain is found at 22–224 (GNDDNSVFDL…LQNVRFVFGT (203 aa)). Residues 50-98 (HLVKGPDPSSPAYRIEDADLIPPLPEDKFQDLLDAIRADRGFILLATLR) form a heparin-binding region. N-linked (GlcNAc...) asparagine glycans are attached at residues asparagine 155 and asparagine 158. A disulfide bond links cysteine 174 and cysteine 235. N-linked (GlcNAc...) asparagine glycosylation is found at asparagine 250 and asparagine 363. Residues 319–376 (GVCLHNGVLHKNRDEWTVDSCTECTCQNSATICRKVSCPLMPCTNATIPDGECCPRCW) form the VWFC domain. 3 consecutive TSP type-1 domains span residues 382-432 (DDDW…QDCD), 438-493 (DGGW…DPCP), and 495-550 (NGQW…QDCP). 18 cysteine pairs are disulfide-bonded: cysteine 394–cysteine 426, cysteine 398–cysteine 431, cysteine 409–cysteine 416, cysteine 450–cysteine 487, cysteine 454–cysteine 492, cysteine 465–cysteine 477, cysteine 507–cysteine 544, cysteine 511–cysteine 549, cysteine 522–cysteine 534, cysteine 554–cysteine 565, cysteine 559–cysteine 575, cysteine 578–cysteine 589, cysteine 595–cysteine 611, cysteine 602–cysteine 620, cysteine 623–cysteine 647, cysteine 653–cysteine 666, cysteine 660–cysteine 679, and cysteine 681–cysteine 692. The 41-residue stretch at 550–590 (PIDGCLSNPCFAGVKCTSFIDGSWKCGSCPPGYRGNGITCK) folds into the EGF-like 1 domain. One can recognise an EGF-like 2 domain in the interval 649-693 (PRNPCADGTHDCHKNARCIYLGHYSDPMFRCECRPGYAGNGIICG). TSP type-3 repeat units follow at residues 694-729 (EDTD…NSGQ), 730-765 (EDYD…NPAQ), 766-788 (YDYD…NPDQ), 789-824 (ADTD…NVDQ), 825-847 (KDTD…NPEQ), 848-885 (TDSD…NANQ), 886-921 (ADHD…NPDQ), and 922-957 (TDTN…EIST). N-linked (GlcNAc...) asparagine glycans are attached at residues asparagine 705 and asparagine 711. 9 cysteine pairs are disulfide-bonded: cysteine 708–cysteine 716, cysteine 721–cysteine 741, cysteine 757–cysteine 777, cysteine 780–cysteine 800, cysteine 816–cysteine 836, cysteine 839–cysteine 859, cysteine 877–cysteine 897, cysteine 913–cysteine 933, and cysteine 949–cysteine 1170. The tract at residues 838-935 (NCPLEHNPEQ…GDGRGDACQY (98 aa)) is disordered. Positions 886–897 (ADHDKDGKGDAC) are enriched in basic and acidic residues. The Cell attachment site motif lies at 929–931 (RGD). The region spanning 961 to 1173 (RKFQMVPLDP…SDLKYECRDS (213 aa)) is the TSP C-terminal domain. Asparagine 1070 is a glycosylation site (N-linked (GlcNAc...) asparagine).

The protein belongs to the thrombospondin family. As to quaternary structure, homotrimer; disulfide-linked.

It is found in the secreted. The protein localises to the cell surface. It localises to the extracellular space. The protein resides in the extracellular matrix. Its subcellular location is the endoplasmic reticulum. It is found in the sarcoplasmic reticulum. In terms of biological role, adhesive glycoprotein that mediates cell-to-cell and cell-to-matrix interactions. Can bind to fibrinogen, fibronectin, laminin, type V collagen and integrins alpha-V/beta-1, alpha-V/beta-3 and alpha-IIb/beta-3. May play a role in ER stress response. This chain is Thrombospondin-1 (thbs1), found in Xenopus laevis (African clawed frog).